A 236-amino-acid polypeptide reads, in one-letter code: Uridylate kinase (236 aa).

9–12 (KISG) contributes to the ATP binding site. Glycine 51 contributes to the UMP binding site. The ATP site is built by glycine 52 and arginine 56. Residues aspartate 71 and 132-139 (TGNSHFTT) contribute to the UMP site. ATP-binding residues include tyrosine 166 and aspartate 169.

The protein belongs to the UMP kinase family. As to quaternary structure, homohexamer.

It localises to the cytoplasm. It catalyses the reaction UMP + ATP = UDP + ADP. It functions in the pathway pyrimidine metabolism; CTP biosynthesis via de novo pathway; UDP from UMP (UMPK route): step 1/1. Inhibited by UTP. In terms of biological role, catalyzes the reversible phosphorylation of UMP to UDP. The polypeptide is Uridylate kinase (Mycoplasmoides gallisepticum (strain R(low / passage 15 / clone 2)) (Mycoplasma gallisepticum)).